The following is a 347-amino-acid chain: D-fructose 1,6-bisphosphatase class 2/sedoheptulose 1,7-bisphosphatase (347 aa).

Positions 33, 57, 97, and 100 each coordinate Mn(2+). Residues 100–102, Y131, 176–178, and 198–200 contribute to the substrate site; these read EGT, RDR, and DGD. E225 is a binding site for Mn(2+).

The protein belongs to the FBPase class 2 family. Homotetramer. Requires Mn(2+) as cofactor.

The enzyme catalyses beta-D-fructose 1,6-bisphosphate + H2O = beta-D-fructose 6-phosphate + phosphate. It catalyses the reaction D-sedoheptulose 1,7-bisphosphate + H2O = D-sedoheptulose 7-phosphate + phosphate. It functions in the pathway carbohydrate biosynthesis; Calvin cycle. Functionally, catalyzes the hydrolysis of fructose 1,6-bisphosphate (Fru 1,6-P2) and sedoheptulose 1,7-bisphosphate (Sed 1,7-P2) to fructose 6-phosphate and sedoheptulose 7-phosphate, respectively. In Thermosynechococcus vestitus (strain NIES-2133 / IAM M-273 / BP-1), this protein is D-fructose 1,6-bisphosphatase class 2/sedoheptulose 1,7-bisphosphatase.